The chain runs to 475 residues: MNIQKDDWMDRRKIVRRNTQSSASTYVLEKLHIDLVIEILSRLSAKSIAICRCVSKQWNSLLVSQDFVESFLRSSLSRPRIWFTFRFDGKWNFFSSPQPQKFGNNLSVEATEHHMGSYENWYMKSCQSVHGFIFMSYNSKGMTDRTQVIWNPCTRQLITLPKLEPENLDFNSFFAYDPTEKQFKVLCMTVVNKQQTTSYKYQVLTLGTGPLLWRNIECPFMYRLRDKSNRGICINGVLYFIGWIKCSTMIIICFDVSSEKFSFIKIENAFIVTLINYRGKLGVYLVVYGSPRGEVWVLDDTKNDNWSKHNFVCPYSGQENSTWATGTGELVWPSSPWTQPFYVVYYNLERQSFRRVDIKGMENKVSTGKDRYDGFFTFTNHVENLMVLPLHKKTIPIQDTLTNRVMERETLTRSPLTQTAYASSYSTTRSYKSSGKRCSDRSIGEDEQDDIGEKRGDQAAERRERSTKRGKHEVH.

One can recognise an F-box domain in the interval 25–71 (TYVLEKLHIDLVIEILSRLSAKSIAICRCVSKQWNSLLVSQDFVESF). The span at 423–433 (SSYSTTRSYKS) shows a compositional bias: low complexity. Residues 423-475 (SSYSTTRSYKSSGKRCSDRSIGEDEQDDIGEKRGDQAAERRERSTKRGKHEVH) form a disordered region. Basic and acidic residues predominate over residues 451-464 (IGEKRGDQAAERRE). Positions 465–475 (RSTKRGKHEVH) are enriched in basic residues.

The protein is Putative F-box protein At1g46840 of Arabidopsis thaliana (Mouse-ear cress).